Here is a 260-residue protein sequence, read N- to C-terminus: UPF0246 protein APJL_0596 (260 aa).

It belongs to the UPF0246 family.

The protein is UPF0246 protein APJL_0596 of Actinobacillus pleuropneumoniae serotype 3 (strain JL03).